Consider the following 812-residue polypeptide: Ras guanine nucleotide exchange factor J (812 aa).

2 stretches are compositionally biased toward low complexity: residues 1-36 (MSNP…NSKS) and 53-65 (LLNR…NLNN). A disordered region spans residues 1-146 (MSNPVSINNS…GGSSGGLNMS (146 aa)). Polar residues predominate over residues 75 to 86 (SFTSNYQNIYTP). A compositionally biased stretch (low complexity) spans 87–101 (NNNSYNSSNNNNNNN). Positions 131–141 (NSGGGGGGSSG) are enriched in gly residues. The region spanning 214–246 (GRDTMLQLILQHLQFEGLMDSRKLLEEEARVQY) is the LisH domain. Residues 320 to 382 (IIYVDDKEKE…NNSIGNSNSY (63 aa)) are disordered. The segment covering 323 to 343 (VDDKEKEKEKEKEKEKEKDKF) has biased composition (basic and acidic residues). Positions 344–382 (GPNSTNSLSGSGSSPNIPSGMNNNSSSIGNNSIGNSNSY) are enriched in low complexity. The region spanning 409–535 (NKPQVKAASL…LSESLNAKIK (127 aa)) is the N-terminal Ras-GEF domain. Residues 573-804 (DEEEIARQLT…YSRSMSFEPR (232 aa)) enclose the Ras-GEF domain.

Promotes the exchange of Ras-bound GDP by GTP. The sequence is that of Ras guanine nucleotide exchange factor J (gefJ) from Dictyostelium discoideum (Social amoeba).